The chain runs to 251 residues: Probable transcriptional regulatory protein Mflv_3828 (251 aa).

The protein belongs to the TACO1 family.

Its subcellular location is the cytoplasm. This chain is Probable transcriptional regulatory protein Mflv_3828, found in Mycolicibacterium gilvum (strain PYR-GCK) (Mycobacterium gilvum (strain PYR-GCK)).